A 156-amino-acid polypeptide reads, in one-letter code: Small ribosomal subunit protein uS7 (156 aa).

It belongs to the universal ribosomal protein uS7 family. As to quaternary structure, part of the 30S ribosomal subunit. Contacts proteins S9 and S11.

In terms of biological role, one of the primary rRNA binding proteins, it binds directly to 16S rRNA where it nucleates assembly of the head domain of the 30S subunit. Is located at the subunit interface close to the decoding center, probably blocks exit of the E-site tRNA. In Clostridioides difficile (strain 630) (Peptoclostridium difficile), this protein is Small ribosomal subunit protein uS7.